We begin with the raw amino-acid sequence, 690 residues long: DNA ligase (690 aa).

NAD(+) is bound by residues Asp49–Asp53, Ser98–Leu99, and Glu129. Lys131 (N6-AMP-lysine intermediate) is an active-site residue. Arg152, Glu191, Lys308, and Lys332 together coordinate NAD(+). Positions 426, 429, 444, and 450 each coordinate Zn(2+). The region spanning Glu607 to Ala690 is the BRCT domain.

Belongs to the NAD-dependent DNA ligase family. LigA subfamily. It depends on Mg(2+) as a cofactor. Mn(2+) is required as a cofactor.

It catalyses the reaction NAD(+) + (deoxyribonucleotide)n-3'-hydroxyl + 5'-phospho-(deoxyribonucleotide)m = (deoxyribonucleotide)n+m + AMP + beta-nicotinamide D-nucleotide.. In terms of biological role, DNA ligase that catalyzes the formation of phosphodiester linkages between 5'-phosphoryl and 3'-hydroxyl groups in double-stranded DNA using NAD as a coenzyme and as the energy source for the reaction. It is essential for DNA replication and repair of damaged DNA. The polypeptide is DNA ligase (Salinibacter ruber (strain DSM 13855 / M31)).